The following is a 656-amino-acid chain: Anion exchange transporter (656 aa).

Over 1-75 (MTGAKRKKRS…LSFAMLSSVH (75 aa)) the chain is Cytoplasmic. The helical transmembrane segment at 76–96 (PVFGLYGSLFPAIIYAIFGMG) threads the bilayer. Over 97–144 (RHVATGTFALTSLISANAVERLVPQSSRNLTTQSNSSVLGLSEFELQR) the chain is Extracellular. Residues 145–165 (IGVAAAVSFLGGVIQLVMFVL) traverse the membrane as a helical segment. Residue Gln166 is a topological domain, cytoplasmic. A helical membrane pass occupies residues 167–187 (LGSATFLLTEPVISAMTTGAA). At 188–199 (THVVTSQVKYLL) the chain is on the extracellular side. The helical transmembrane segment at 200-220 (GIKMPYISGPLGFFYIYAYVF) threads the bilayer. The Cytoplasmic segment spans residues 221-222 (EN). Residues 223–243 (IKSVQLEALLFSLLSIIVLVL) traverse the membrane as a helical segment. Topologically, residues 244 to 254 (VKELNEQFKRK) are extracellular. A helical membrane pass occupies residues 255–275 (IKVVLPVDLVLIIAASFACYC). Residues 276-306 (TNMENTYGLEVVGHIPNGIPPPRAPPMNILS) lie on the Cytoplasmic side of the membrane. A helical membrane pass occupies residues 307–327 (AVLTEAFGVALVGYVASLALA). The Extracellular portion of the chain corresponds to 328-343 (QGSAKKFKYSVDDNQE). Residues 344–364 (FLAHGLSNVIPSFLFCIPSAA) form a helical membrane-spanning segment. At 365–383 (AMGRTAGLYSTGAKTQVAC) the chain is on the cytoplasmic side. 2 helical membrane passes run 384 to 404 (LISCIFVLIVIYAIGPLLYWL) and 405 to 425 (PMCVLASIIVVGLKGMLIQFR). The Extracellular segment spans residues 426-448 (DLKKYWNVDKIDWGIWISTYIFT). The helical transmembrane segment at 449 to 469 (ICFAANVGLLFGVICTIAIVL) threads the bilayer. Topologically, residues 470-656 (GRFPRAKTLS…LSKASDHSEV (187 aa)) are cytoplasmic. The 150-residue stretch at 492-641 (TEMHDETSQQ…DSVPAAISII (150 aa)) folds into the STAS domain. The segment at 641-656 (IQSNKNLSKASDHSEV) is membrane targeting.

The protein belongs to the SLC26A/SulP transporter (TC 2.A.53) family. In terms of tissue distribution, expressed in the Reissner's membrane epithelial cells in the cochlea (at protein level). Expressed in the retinal pigment epithelium (at protein level). Abundantly expressed in parietal cells on the glandular portion of the stomach. Lower levels are observed in the kidney, with expression in the proximal tubule and thick ascending limb of the loop of Henle. Also expressed in distal segments of nephron, in extraglomerular mesagial cells and a subpopulation of intercalated cells of outer medullary collecting ducts. Expressed in the thyroid gland.

The protein resides in the basolateral cell membrane. Its subcellular location is the recycling endosome membrane. The protein localises to the apical cell membrane. It localises to the lateral cell membrane. It carries out the reaction chloride(in) = chloride(out). The catalysed reaction is iodide(out) = iodide(in). The enzyme catalyses bromide(in) = bromide(out). It catalyses the reaction oxalate(in) = oxalate(out). It carries out the reaction nitrate(in) = nitrate(out). The catalysed reaction is sulfate(in) = sulfate(out). The enzyme catalyses hydrogencarbonate(in) = hydrogencarbonate(out). It catalyses the reaction D-gluconate(in) = D-gluconate(out). It carries out the reaction thiocyanate(in) = thiocyanate(out). The catalysed reaction is hydrogencarbonate(in) + chloride(out) = hydrogencarbonate(out) + chloride(in). Regulated by pH. Activity inhibited by all inhibitors of several anion channels and transporters, including 4,4'-Di-isothiocyanatostilbene-2,2'-disulfonic acid (DIDS), diphenylamine-2-carboxylic acid, glybenclamide and 5-Nitro-2-(3-phenylpropyl-amino)benzoic acid. Acts as an anion channel mediating the transport of chloride, bromide, iodide, nitrate, sulfate, gluconate, thiocyanate and bicarbonate ions. Its permeability towards bicarbonate is weak and increases when pH is above 7. Mediates oxalate transport. Mediates thiocyanate transport in retinal pigment epithelium cells. Mediates iodide transport in the thyroid gland, playing an important role in the synthesis of thyroid hormones and the maintenance of thyroid function. Although it is an anion channel, according to PubMed:12736153 and PubMed:19723628 it has been shown to exhibit chloride-bicarbonate exchanger activity. This is Anion exchange transporter from Mus musculus (Mouse).